Reading from the N-terminus, the 134-residue chain is Biopolymer transport protein exbD2 (134 aa).

Residues Met1–Leu17 lie on the Cytoplasmic side of the membrane. The helical transmembrane segment at Thr18–Val38 threads the bilayer. Topologically, residues Arg39–Pro134 are periplasmic.

The protein belongs to the ExbD/TolR family. In terms of assembly, the accessory proteins ExbB and ExbD seem to form a complex with TonB.

Its subcellular location is the cell inner membrane. Involved in the TonB-dependent energy-dependent transport of various receptor-bound substrates. The polypeptide is Biopolymer transport protein exbD2 (exbD2) (Vibrio cholerae serotype O1 (strain ATCC 39315 / El Tor Inaba N16961)).